A 297-amino-acid chain; its full sequence is ClpXP adapter protein SpxH (297 aa).

This sequence belongs to the SpxH family. As to quaternary structure, interacts with Spx.

It is found in the cytoplasm. Its function is as follows. Adapter protein required for efficient degradation of Spx by ClpXP under non-stress conditions. Interaction with Spx stabilizes Spx and exposes the C-terminus of Spx for recognition and proteolysis by ClpXP. The chain is ClpXP adapter protein SpxH from Bacillus cereus (strain ATCC 14579 / DSM 31 / CCUG 7414 / JCM 2152 / NBRC 15305 / NCIMB 9373 / NCTC 2599 / NRRL B-3711).